The sequence spans 57 residues: Large ribosomal subunit protein bL32 (57 aa).

The span at 1 to 20 shows a compositional bias: basic residues; that stretch reads MAVPKKKTSKTKRDQRKANW. Positions 1-21 are disordered; sequence MAVPKKKTSKTKRDQRKANWK.

The protein belongs to the bacterial ribosomal protein bL32 family.

This is Large ribosomal subunit protein bL32 from Rippkaea orientalis (strain PCC 8801 / RF-1) (Cyanothece sp. (strain PCC 8801)).